The sequence spans 222 residues: Putative hemin import ATP-binding protein HrtA (222 aa).

The region spanning 3 to 222 (LVVKDISKTF…QLYDGKIKNS (220 aa)) is the ABC transporter domain. 39-46 (GASGSGKT) lines the ATP pocket.

This sequence belongs to the ABC transporter superfamily. HrtA family. In terms of assembly, the complex is composed of two ATP-binding proteins (HrtA), two transmembrane proteins (HrtB) and a solute-binding protein.

The protein localises to the cell membrane. Part of the ABC transporter complex hrt involved in hemin import. Responsible for energy coupling to the transport system. The sequence is that of Putative hemin import ATP-binding protein HrtA (hrtA) from Staphylococcus epidermidis (strain ATCC 35984 / DSM 28319 / BCRC 17069 / CCUG 31568 / BM 3577 / RP62A).